The sequence spans 389 residues: Phospho-N-acetylmuramoyl-pentapeptide-transferase (389 aa).

10 helical membrane-spanning segments follow: residues 21–41 (FITFRAVFATLTALAIGLFFG), 70–90 (GTPTMGGALILLAIGVATLLW), 97–117 (FVWVVLIVTLGFGAVGWVDDY), 134–154 (YMWQSIIGLFAAVYLAFSVSA), 189–209 (TISYPLGVWGFIALTYFVIVG), 222–242 (GLAIMPTVMVGTALGLFAYLT), 259–279 (AGELIIFCGAMAGAGLAFLWF), 286–306 (VFMGDVGALALGGALGTIAVI), 311–331 (IVLFIMGGVFVVETLSVMIQV), and 366–386 (QVVVRFWIITMMLVLFGLSTL).

The protein belongs to the glycosyltransferase 4 family. MraY subfamily. It depends on Mg(2+) as a cofactor.

The protein localises to the cell inner membrane. It carries out the reaction UDP-N-acetyl-alpha-D-muramoyl-L-alanyl-gamma-D-glutamyl-meso-2,6-diaminopimeloyl-D-alanyl-D-alanine + di-trans,octa-cis-undecaprenyl phosphate = di-trans,octa-cis-undecaprenyl diphospho-N-acetyl-alpha-D-muramoyl-L-alanyl-D-glutamyl-meso-2,6-diaminopimeloyl-D-alanyl-D-alanine + UMP. Its pathway is cell wall biogenesis; peptidoglycan biosynthesis. Catalyzes the initial step of the lipid cycle reactions in the biosynthesis of the cell wall peptidoglycan: transfers peptidoglycan precursor phospho-MurNAc-pentapeptide from UDP-MurNAc-pentapeptide onto the lipid carrier undecaprenyl phosphate, yielding undecaprenyl-pyrophosphoryl-MurNAc-pentapeptide, known as lipid I. The chain is Phospho-N-acetylmuramoyl-pentapeptide-transferase from Herminiimonas arsenicoxydans.